Consider the following 130-residue polypeptide: Small ribosomal subunit protein uS9 (130 aa).

This sequence belongs to the universal ribosomal protein uS9 family.

This is Small ribosomal subunit protein uS9 from Stutzerimonas stutzeri (strain A1501) (Pseudomonas stutzeri).